The sequence spans 275 residues: Polar tube protein 2 (275 aa).

Positions methionine 1–serine 18 are cleaved as a signal peptide. N-linked (GlcNAc...) asparagine glycans are attached at residues asparagine 132 and asparagine 248. The interval isoleucine 233 to glutamate 275 is disordered. The span at glutamine 234–threonine 249 shows a compositional bias: basic and acidic residues. The segment covering tyrosine 253–glutamate 263 has biased composition (acidic residues).

The protein resides in the spore polar tube. Functionally, involved in formation of a polar tube through which the infectious agent is passed on to the host cell. This chain is Polar tube protein 2 (PTP2), found in Encephalitozoon intestinalis (Microsporidian parasite).